A 321-amino-acid chain; its full sequence is Phosphatidate cytidylyltransferase, mitochondrial (321 aa).

The protein belongs to the TAM41 family. It depends on Mg(2+) as a cofactor. Co(2+) serves as cofactor. Cu(2+) is required as a cofactor.

The protein localises to the mitochondrion inner membrane. It catalyses the reaction a 1,2-diacyl-sn-glycero-3-phosphate + CTP + H(+) = a CDP-1,2-diacyl-sn-glycerol + diphosphate. The protein operates within phospholipid metabolism; CDP-diacylglycerol biosynthesis; CDP-diacylglycerol from sn-glycerol 3-phosphate: step 3/3. Functionally, catalyzes the formation of CDP-diacylglycerol (CDP-DAG) from phosphatidic acid (PA) in the mitochondrial inner membrane. Required for the biosynthesis of the dimeric phospholipid cardiolipin, which stabilizes supercomplexes of the mitochondrial respiratory chain in the mitochondrial inner membrane. The sequence is that of Phosphatidate cytidylyltransferase, mitochondrial from Caenorhabditis briggsae.